We begin with the raw amino-acid sequence, 469 residues long: 3-isopropylmalate dehydratase large subunit (469 aa).

Positions 349, 409, and 412 each coordinate [4Fe-4S] cluster.

It belongs to the aconitase/IPM isomerase family. LeuC type 1 subfamily. In terms of assembly, heterodimer of LeuC and LeuD. It depends on [4Fe-4S] cluster as a cofactor.

It carries out the reaction (2R,3S)-3-isopropylmalate = (2S)-2-isopropylmalate. It functions in the pathway amino-acid biosynthesis; L-leucine biosynthesis; L-leucine from 3-methyl-2-oxobutanoate: step 2/4. Its function is as follows. Catalyzes the isomerization between 2-isopropylmalate and 3-isopropylmalate, via the formation of 2-isopropylmaleate. The chain is 3-isopropylmalate dehydratase large subunit from Methylorubrum populi (strain ATCC BAA-705 / NCIMB 13946 / BJ001) (Methylobacterium populi).